Reading from the N-terminus, the 487-residue chain is MQSTKKAIEITESNFAAATTGYDAVDDLLHYHERGNGIQINGKDSFSNEQAGLFITRENQTWNGYKVFGQPVKLTFSFPDYKFSSTNVAGDTGLSKFSAEQQQQAKLSLQSWADVANITFTEVAAGQKANITFGNYSQDRPGHYDYGTQAYAFLPNTIWQGQDLGGQTWYNVNQSNVKHPATEDYGRQTFTHEIGHALGLSHPGDYNAGEGNPTYRDVTYAEDTRQFSLMSYWSETNTGGDNGGHYAAAPLLDDIAAIQHLYGANLSTRTGDTVYGFNSNTGRDFLSTTSNSQKVIFAAWDAGGNDTFDFSGYTANQRINLNEKSFSDVGGLKGNVSIAAGVTIENAIGGSGNDVIVGNAANNVLKGGAGNDVLFGGGGADELWGGAGKDIFVFSAASDSAPGASDWIRDFQKGIDKIDLSFFNKEAQSSDFIHFVDHFSGAAGEALLSYNASNNVTDLSVNIGGHQAPDFLVKIVGQVDVATDFIV.

Positions 1 to 16 (MQSTKKAIEITESNFA) are excised as a propeptide. Zn(2+) is bound at residue H192. The active site involves E193. Residues H196, H202, and Y232 each contribute to the Zn(2+) site. R269, G271, T273, D301, G303, G304, D306, T343, E345, G350, G352, D354, N359, A361, N363, G367, G368, A369, D372, G376, G377, G378, G379, D381, G385, G386, A387, G388, D390, D399, D406, and D416 together coordinate Ca(2+). 2 Hemolysin-type calcium-binding repeats span residues 348 to 365 (IGGS…NNVL) and 366 to 383 (KGGA…ADEL).

The protein belongs to the peptidase M10B family. Requires Ca(2+) as cofactor. The cofactor is Zn(2+).

Its subcellular location is the secreted. The enzyme catalyses Preferential cleavage of bonds with hydrophobic residues in P1'.. Functionally, naturally present in the silkworm intestine and allows the emerging moth to dissolve its cocoon. The sequence is that of Serralysin from Serratia marcescens (strain ATCC 21074 / E-15).